Consider the following 303-residue polypeptide: N-acetyl-D-glucosamine kinase (303 aa).

ATP contacts are provided by residues 4 to 11 and 133 to 140; these read GFDIGGTK and GVGGGLVL. Zn(2+) is bound by residues His157, Cys177, Cys179, and Cys184.

Belongs to the ROK (NagC/XylR) family. NagK subfamily.

The catalysed reaction is N-acetyl-D-glucosamine + ATP = N-acetyl-D-glucosamine 6-phosphate + ADP + H(+). It functions in the pathway cell wall biogenesis; peptidoglycan recycling. In terms of biological role, catalyzes the phosphorylation of N-acetyl-D-glucosamine (GlcNAc) derived from cell-wall degradation, yielding GlcNAc-6-P. This is N-acetyl-D-glucosamine kinase from Salmonella gallinarum (strain 287/91 / NCTC 13346).